The following is a 570-amino-acid chain: Phosphocholine hydrolase Lem3 (570 aa).

Its subcellular location is the secreted. The protein resides in the host cytoplasm. It carries out the reaction [Rab1 protein]-O-phosphocholine-L-serine + H2O = [Rab1 protein]-L-serine + phosphocholine + H(+). Functionally, virulence effector that plays a role in hijacking the host vesicular trafficking by recruiting the small guanosine triphosphatase (GTPase) Rab1 to the cytosolic face of the Legionella-containing vacuole (LCVs). Acts as a phosphocholine hydrolase by mediating the hydrolysis of phosphocholine to Ser residues of host RAB1 (RAB1A, RAB1B or RAB1C). Dephosphocholination of target proteins restores accessibility to GTPase effector LepB. Can act on both GDP-bound and GTP-bound Rab proteins. In Legionella pneumophila subsp. pneumophila (strain Philadelphia 1 / ATCC 33152 / DSM 7513), this protein is Phosphocholine hydrolase Lem3 (lem3).